The primary structure comprises 624 residues: ERAD-associated E3 ubiquitin-protein ligase ASI1 (624 aa).

At methionine 1–serine 69 the chain is on the perinuclear space side. N-linked (GlcNAc...) asparagine glycosylation is found at asparagine 2, asparagine 19, and asparagine 29. Residues valine 70–isoleucine 90 form a helical membrane-spanning segment. Over valine 91 to asparagine 116 the chain is Nuclear. The helical transmembrane segment at valine 117–glycine 137 threads the bilayer. Residues lysine 138–lysine 152 are Perinuclear space-facing. The chain crosses the membrane as a helical span at residues phenylalanine 153–isoleucine 173. The Nuclear segment spans residues methionine 174–aspartate 209. Residues tyrosine 210–phenylalanine 230 form a helical membrane-spanning segment. Topologically, residues arginine 231 to proline 273 are perinuclear space. Residues lysine 274 to isoleucine 294 traverse the membrane as a helical segment. At arginine 295–lysine 624 the chain is on the nuclear side. The tract at residues threonine 467–glutamate 490 is disordered. Over residues serine 468–glutamate 490 the composition is skewed to acidic residues. An RING-type; atypical zinc finger spans residues cysteine 568 to arginine 608.

In terms of assembly, component of the Asi complex, which contains ASI1, ASI2 and ASI3. Interacts directly with ASI3. Post-translationally, glycosylation is not required for ASI1 function.

It is found in the nucleus inner membrane. The enzyme catalyses S-ubiquitinyl-[E2 ubiquitin-conjugating enzyme]-L-cysteine + [acceptor protein]-L-lysine = [E2 ubiquitin-conjugating enzyme]-L-cysteine + N(6)-ubiquitinyl-[acceptor protein]-L-lysine.. In terms of biological role, E3 ubiquitin-protein ligase which transfers ubiquitin to substrates promoting their degradation. Part of the nuclear inner membrane (INM)-specific branch of the ER-associated degradation (ERAD) pathway, required for the elimination of misfolded proteins in the INM, a specialized ER subdomain. Required for ERG11 degradation. Negative regulator of SPS-sensor signaling. Together with ASI2 and ASI3, prevents the unprocessed precursor forms of STP1 and STP2 that escape cytoplasmic anchoring from inducing SPS-sensor-regulated genes in the absence of inducing signals. Controls amino acid permease (AAP) gene expression in response to amino acid availability, a process mediated by the transcription factors STP1 and STP1. This chain is ERAD-associated E3 ubiquitin-protein ligase ASI1 (ASI1), found in Saccharomyces cerevisiae (strain ATCC 204508 / S288c) (Baker's yeast).